The primary structure comprises 102 residues: uncharacterized protein (102 aa).

Residues Met-1–Gln-102 form a disordered region.

This is an uncharacterized protein from Caenorhabditis elegans.